The following is a 164-amino-acid chain: Phosphopantetheine adenylyltransferase (164 aa).

Ser9 is a substrate binding site. Residues 9–10 and His17 contribute to the ATP site; that span reads SF. The substrate site is built by Lys41, Val78, and Arg92. Residues 93-95, Glu103, and 128-134 contribute to the ATP site; these read GLR and SRPITAT.

Belongs to the bacterial CoaD family. In terms of assembly, homohexamer. Requires Mg(2+) as cofactor.

The protein resides in the cytoplasm. The catalysed reaction is (R)-4'-phosphopantetheine + ATP + H(+) = 3'-dephospho-CoA + diphosphate. The protein operates within cofactor biosynthesis; coenzyme A biosynthesis; CoA from (R)-pantothenate: step 4/5. Its function is as follows. Reversibly transfers an adenylyl group from ATP to 4'-phosphopantetheine, yielding dephospho-CoA (dPCoA) and pyrophosphate. This Agrobacterium fabrum (strain C58 / ATCC 33970) (Agrobacterium tumefaciens (strain C58)) protein is Phosphopantetheine adenylyltransferase.